Here is a 200-residue protein sequence, read N- to C-terminus: Recombination protein RecR (200 aa).

Residues 57 to 72 (CSECRTFTEEDTCAIC) form a C4-type zinc finger. The Toprim domain occupies 81-176 (GELCIVESPA…SASRIAHGVP (96 aa)).

This sequence belongs to the RecR family.

May play a role in DNA repair. It seems to be involved in an RecBC-independent recombinational process of DNA repair. It may act with RecF and RecO. This Aliivibrio salmonicida (strain LFI1238) (Vibrio salmonicida (strain LFI1238)) protein is Recombination protein RecR.